We begin with the raw amino-acid sequence, 385 residues long: Probable nitrate transporter NarT (385 aa).

12 consecutive transmembrane segments (helical) span residues 14-34 (TLSLVVGFMAWSIISPLMPYI), 47-67 (IILAIPVILGSILRVPFGYLT), 69-89 (IIGAKWVFFCSFVILLFPIFF), 97-117 (GMLMLSGFFLGVGGAIFSVGV), 139-159 (GNIGTAVSSFLAPPIAGIIGW), 161-181 (TTVRSYLIIIAIFAILMFIFG), 205-225 (LYYLSLWYFITFGAFVAFGLF), 246-266 (GVFIALATFLRPIGGILGDKF), 277-297 (IIMIVGAVILGISSHIALFTI), 302-322 (ISICAGLGNGLIFKLVPSYFA), 330-350 (GIVSMMGGLGGFFPPLVITYV), and 359-379 (LAFILLAIFGVLAFITMGHLY).

The protein belongs to the major facilitator superfamily. Nitrate/nitrite porter (TC 2.A.1.8) family.

The protein localises to the cell membrane. Its function is as follows. Probably required for nitrate uptake under anoxic conditions. Also possibly involved in excretion of nitrite produced by the dissimilatory reduction of nitrate. In Staphylococcus haemolyticus (strain JCSC1435), this protein is Probable nitrate transporter NarT (narT).